A 311-amino-acid polypeptide reads, in one-letter code: Porphobilinogen deaminase (311 aa).

The residue at position 241 (Cys241) is an S-(dipyrrolylmethanemethyl)cysteine.

The protein belongs to the HMBS family. In terms of assembly, monomer. Dipyrromethane serves as cofactor.

It carries out the reaction 4 porphobilinogen + H2O = hydroxymethylbilane + 4 NH4(+). Its pathway is porphyrin-containing compound metabolism; protoporphyrin-IX biosynthesis; coproporphyrinogen-III from 5-aminolevulinate: step 2/4. Its function is as follows. Tetrapolymerization of the monopyrrole PBG into the hydroxymethylbilane pre-uroporphyrinogen in several discrete steps. In Campylobacter curvus (strain 525.92), this protein is Porphobilinogen deaminase.